Here is a 359-residue protein sequence, read N- to C-terminus: UbiA prenyltransferase domain-containing protein 1 homolog (359 aa).

Over residues 1–16 (MATSSQLLPNGNLSRN) the composition is skewed to polar residues. A disordered region spans residues 1–23 (MATSSQLLPNGNLSRNGKTKTED). The next 8 helical transmembrane spans lie at 67–89 (ALRP…LAYR), 98–118 (LATF…GNVV), 148–168 (VVSL…LLAV), 177–197 (LALI…GIGF), 200–220 (IALG…LFAF), 262–284 (IVTL…LLFA), 289–311 (FFIF…PQAF), and 335–355 (FFFG…PTFG).

It belongs to the UbiA prenyltransferase family.

It localises to the mitochondrion membrane. The protein operates within quinol/quinone metabolism; menaquinone biosynthesis. Functionally, prenyltransferase that mediates the formation of menaquinone-4 (MK-4), a vitamin K2 isoform, thereby acting as a mitochondrial electron carrier. Mediates the conversion of phylloquinone (PK) into MK-4, probably by cleaving the side chain of phylloquinone (PK) to release 2-methyl-1,4-naphthoquinone (menadione; K3) and then prenylating it with geranylgeranyl pyrophosphate (GGPP) to form MK-4. MK-4 acts as a membrane electron carrier downstream of a electron transport chain complex, improving mitochondrial oxygen consumption. This chain is UbiA prenyltransferase domain-containing protein 1 homolog (heix), found in Drosophila melanogaster (Fruit fly).